Here is a 359-residue protein sequence, read N- to C-terminus: MISKDPRSSLPPGFRFHPTDEELILHYLRKKVSSSPVPLSIIADVDIYKSDPWDLPAKAPFGEKEWYFFSPRDRKYPNGARPNRAAASGYWKATGTDKLIAVPNGEGFHENIGIKKALVFYRGKPPKGVKTNWIMHEYRLADSLSPKRINSSRSGGSEVNNNFGDRNSKEYSMRLDDWVLCRIYKKSHASLSSPDVALVTSNQEHEENDNEPFVDRGTFLPNLQNDQPLKRQKSSCSFSNLLDATDLTFLANFLNETPENRSESDFSFMIGNFSNPDIYGNHYLDQKLPQLSSPTSETSGIGSKRERVDFAEETINASKKMMNTYSYNNSIDQMDHSMMQQPSFLNQELMMSSHLQYQG.

An NAC domain is found at 10 to 186 (LPPGFRFHPT…DWVLCRIYKK (177 aa)). Residues 112 to 192 (IGIKKALVFY…IYKKSHASLS (81 aa)) mediate DNA binding. Disordered regions lie at residues 147-166 (KRIN…FGDR) and 200-226 (TSNQ…LQND). Over residues 148–165 (RINSSRSGGSEVNNNFGD) the composition is skewed to polar residues.

The protein resides in the nucleus. Transcription factor that binds to the promoter of ACO5, an ACC oxidase involved in ethylene biosynthesis. Mediates waterlogging-induced hyponastic leaf movement, and cell expansion in abaxial cells of the basal petiole region, by directly regulating the expression of ACO5. Required for normal seed development and morphology. This Arabidopsis thaliana (Mouse-ear cress) protein is NAC transcription factor 47.